Consider the following 494-residue polypeptide: Cytochrome P450 2A6 (494 aa).

Substrate is bound by residues F107 and N297. Position 439 (C439) interacts with heme.

The protein belongs to the cytochrome P450 family. Heme serves as cofactor. As to expression, liver.

The protein localises to the endoplasmic reticulum membrane. It localises to the microsome membrane. The catalysed reaction is 1,4-cineole + reduced [NADPH--hemoprotein reductase] + O2 = 2-exo-hydroxy-1,4-cineole + oxidized [NADPH--hemoprotein reductase] + H2O + H(+). Its function is as follows. Exhibits a high coumarin 7-hydroxylase activity. Can act in the hydroxylation of the anti-cancer drugs cyclophosphamide and ifosphamide. Competent in the metabolic activation of aflatoxin B1. Constitutes the major nicotine C-oxidase. Acts as a 1,4-cineole 2-exo-monooxygenase. Possesses low phenacetin O-deethylation activity. This is Cytochrome P450 2A6 (CYP2A6) from Homo sapiens (Human).